Here is a 380-residue protein sequence, read N- to C-terminus: MAPNLRKSHPLLKLVNNSLIDLPTPSNISAWWNFGSLLGICLLTQILTGLLLATHYTADTTLAFSSVAHTCRNVQYGWLIRNLHANGASFFFICIYLHIGRGFYYGSYLNKETWNTGVILLLALMATAFVGYVLPWGQMSFWGATVITNLFSAIPYIGQTLVEWAWGGFSVDNPTLTRFFALHFLLPFMIAGLAFIHLTFLHESGSNNPLGIPSNCDKIPFHPYFSLKDILGFIIMFLPLTTLALFSPNLLGDPENFTPANPLVTPPHIKPEWYFLFAYAILRSIPNKLGGVLALAASVLVLFLTPLLHKSKQRAMTFRPLSQLLFWTLVANLLILTWVGSQPVEHPFIIIGQLASLTYFTILLLLFPIIGALENKMLNY.

4 helical membrane passes run 34 to 54 (FGSL…LLAT), 78 to 99 (WLIR…YLHI), 114 to 134 (WNTG…GYVL), and 179 to 199 (FFAL…IHLT). The heme b site is built by histidine 84 and histidine 98. Heme b is bound by residues histidine 183 and histidine 197. Histidine 202 is a binding site for a ubiquinone. Transmembrane regions (helical) follow at residues 227-247 (LKDI…ALFS), 289-309 (LGGV…PLLH), 321-341 (LSQL…WVGS), and 348-368 (FIII…LLFP).

This sequence belongs to the cytochrome b family. In terms of assembly, the cytochrome bc1 complex contains 11 subunits: 3 respiratory subunits (MT-CYB, CYC1 and UQCRFS1), 2 core proteins (UQCRC1 and UQCRC2) and 6 low-molecular weight proteins (UQCRH/QCR6, UQCRB/QCR7, UQCRQ/QCR8, UQCR10/QCR9, UQCR11/QCR10 and a cleavage product of UQCRFS1). This cytochrome bc1 complex then forms a dimer. The cofactor is heme b.

Its subcellular location is the mitochondrion inner membrane. Its function is as follows. Component of the ubiquinol-cytochrome c reductase complex (complex III or cytochrome b-c1 complex) that is part of the mitochondrial respiratory chain. The b-c1 complex mediates electron transfer from ubiquinol to cytochrome c. Contributes to the generation of a proton gradient across the mitochondrial membrane that is then used for ATP synthesis. This chain is Cytochrome b (MT-CYB), found in Uria aalge (Common mure).